Reading from the N-terminus, the 468-residue chain is Cyclin-T1.1 (468 aa).

The span at 336–354 shows a compositional bias: basic and acidic residues; the sequence is KERGVEEERRKRERDRMAG. The disordered stretch occupies residues 336–468; sequence KERGVEEERR…DMDLEDGELE (133 aa). The span at 387-402 shows a compositional bias: pro residues; it reads APPPIPPQLNFPPPPI. The segment covering 458–468 has biased composition (acidic residues); it reads SDMDLEDGELE.

This sequence belongs to the cyclin family. Cyclin C subfamily.

Functionally, regulatory subunit of the cyclin-dependent kinase pair (CDK9/cyclin T) complex, also called positive transcription elongation factor B (P-TEFb), which is proposed to facilitate the transition from abortive to production elongation by phosphorylating the CTD (carboxy-terminal domain) of the large subunit of RNA polymerase II (RNAP II). The sequence is that of Cyclin-T1.1 from Caenorhabditis elegans.